Reading from the N-terminus, the 238-residue chain is Probable transcriptional regulatory protein SPH_2064 (238 aa).

It belongs to the TACO1 family. YeeN subfamily.

It localises to the cytoplasm. In Streptococcus pneumoniae (strain Hungary19A-6), this protein is Probable transcriptional regulatory protein SPH_2064.